The following is a 154-amino-acid chain: Snaclec dabocetin subunit alpha (154 aa).

The signal sequence occupies residues 1-23 (MGRFISVSFGLLVVFLSLSGTGA). 3 disulfides stabilise this stretch: Cys-25-Cys-36, Cys-53-Cys-148, and Cys-123-Cys-140. Positions 32–149 (HEGHCYKVFK…CGDKNPFICK (118 aa)) constitute a C-type lectin domain.

This sequence belongs to the snaclec family. As to quaternary structure, heterodimer of subunits alpha and beta; disulfide-linked. Expressed by the venom gland.

It is found in the secreted. Inhibits ristocetin-induced platelet aggregation via binding to platelet glycoprotein Ibalpha (GP1BA). The polypeptide is Snaclec dabocetin subunit alpha (Daboia siamensis (Eastern Russel's viper)).